The chain runs to 351 residues: Lipopolysaccharide core biosynthesis mannosyltransferase LpsB (351 aa).

Belongs to the glycosyltransferase group 1 family. Glycosyltransferase 4 subfamily.

It functions in the pathway bacterial outer membrane biogenesis; LPS core biosynthesis. Acts at transfer of mannose group to a 3-deoxy-D-mono octulonic acid (KDO) via an alpha-1,5 linkage. The chain is Lipopolysaccharide core biosynthesis mannosyltransferase LpsB (lpsB) from Rhizobium meliloti (strain 1021) (Ensifer meliloti).